We begin with the raw amino-acid sequence, 130 residues long: Capsid protein (130 aa).

The tract at residues 32–105 (EWISSNSRSQ…FATNSDCELI (74 aa)) is viral RNA-binding.

The protein belongs to the Leviviricetes capsid protein family. In terms of assembly, homodimer. The capsid proteins form dimers that assemble by group of 5. Twelve such pentamers are linked together with free dimers. The homodimers binds to the viral RNA via an operator hairpin, but also to many other RNA sequences in the viral genome; this interaction probably shifts the virus from the replicative to the assembly phase and ensures specific encapsidation of the viral genome.

The protein localises to the virion. In terms of biological role, capsid protein self-assembles to form an icosahedral capsid with a T=3 symmetry, about 26 nm in diameter, and consisting of 89 capsid proteins dimers (178 capsid proteins). Involved in viral genome encapsidation through the interaction between a capsid protein dimer and the multiple packaging signals present in the RNA genome. The capsid also contains 1 copy of the A2 maturation protein. Acts as a translational repressor of viral replicase synthesis late in infection. This latter function is the result of capsid protein interaction with an RNA hairpin which contains the replicase ribosome-binding site. The sequence is that of Capsid protein from Enterobacteria phage ZR (Bacteriophage ZR).